A 64-amino-acid polypeptide reads, in one-letter code: DNA gyrase inhibitor YacG (64 aa).

Zn(2+) contacts are provided by Cys9, Cys12, Cys28, and Cys32. The disordered stretch occupies residues 45-64 (NAIAGAPDMSDSDGWSEDQY). Residues 54–64 (SDSDGWSEDQY) show a composition bias toward acidic residues.

It belongs to the DNA gyrase inhibitor YacG family. Interacts with GyrB. It depends on Zn(2+) as a cofactor.

Inhibits all the catalytic activities of DNA gyrase by preventing its interaction with DNA. Acts by binding directly to the C-terminal domain of GyrB, which probably disrupts DNA binding by the gyrase. The chain is DNA gyrase inhibitor YacG from Vibrio parahaemolyticus serotype O3:K6 (strain RIMD 2210633).